Consider the following 146-residue polypeptide: MAFWDEKTLAQMNTEEWESLCDGCGKCCLNKLIDDETEELYYTNAACQLLDNKAGHCKSYEQRFNFVPSCTKVTVDNLESLTWLPDSCAYRRLLQGRELPSWHPLRTGSKEAMILAGMSVAGKVTCETKIRDIEDHIVLWPMKDVE.

The protein belongs to the UPF0260 family.

The sequence is that of UPF0260 protein Spea_2441 from Shewanella pealeana (strain ATCC 700345 / ANG-SQ1).